We begin with the raw amino-acid sequence, 341 residues long: HTH-type transcriptional repressor PurR (341 aa).

One can recognise an HTH lacI-type domain in the interval 2–56 (ATIKDVAKRANVSTTTVSHVINKTRFVAEETRNAVWAAIKELHYSPSAVARSLKV). A DNA-binding region (H-T-H motif) is located at residues 4-23 (IKDVAKRANVSTTTVSHVIN). A DNA-binding region spans residues 48–56 (SAVARSLKV). Hypoxanthine-binding residues include Tyr73, Arg190, Thr192, Phe221, and Asp275.

As to quaternary structure, homodimer.

It participates in purine metabolism; purine nucleotide biosynthesis [regulation]. Is the main repressor of the genes involved in the de novo synthesis of purine nucleotides, regulating purB, purC, purEK, purF, purHD, purL, purMN and guaBA expression. PurR is allosterically activated to bind its cognate DNA by binding the purine corepressors, hypoxanthine or guanine, thereby effecting transcription repression. The polypeptide is HTH-type transcriptional repressor PurR (Escherichia fergusonii (strain ATCC 35469 / DSM 13698 / CCUG 18766 / IAM 14443 / JCM 21226 / LMG 7866 / NBRC 102419 / NCTC 12128 / CDC 0568-73)).